The following is a 590-amino-acid chain: Ankyrin repeat-containing protein ITN1 (590 aa).

The disordered stretch occupies residues 25–44 (ENQNPMIDPSPTPSPSATAT). 7 ANK repeats span residues 73-102 (HNDTELHLAAQRGDLAAVQQILKDINSQME), 128-157 (LGETALFTAADKGHLDVVKELLKYSSRESI), 163-192 (SGYDPLHIAAIQGHHAIVEVLLDHDATLSQ), 197-226 (SNATPLVSAAMRGHTEVVNQLLSKAGNLLE), 231-260 (NNKNALHLAARQGHVEVIKALLSKDPQLAR), 265-294 (KGQTALHMAVKGQSSEVVKLLLDADPAIVM), and 299-329 (SCNTALHVATRKKRAEIVELLLSLPDTNANT). The next 4 helical transmembrane spans lie at 422–442 (VTVVAVLFATVAFAAIFTVPG), 460–480 (IFFIFNALALFTSLAVVVVQI), 500–520 (LMWLASMCTSVAFLASSYIVV), and 531–551 (VTVVGGVIMAGVLGTMTYYVV).

In terms of assembly, interacts with REM19/RTV1. In terms of tissue distribution, expressed in roots, shoots, leaf vasculature and stems.

It is found in the cell membrane. Its function is as follows. Involved in salt stress tolerance. May act through abscisic acid (ABA) signaling pathways and promote reactive oxygen species (ROS) production. This is Ankyrin repeat-containing protein ITN1 from Arabidopsis thaliana (Mouse-ear cress).